Reading from the N-terminus, the 404-residue chain is Plasma serine protease inhibitor (404 aa).

Residues 1 to 19 form the signal peptide; it reads MRLCLFLCLVLLGPRMATL. A propeptide spans 20-24 (removed in mature form); sequence RRSQK. Thr35 and Thr36 each carry an O-linked (GalNAc...) threonine glycan. Residues Asn245, Asn258, and Asn334 are each glycosylated (N-linked (GlcNAc...) asparagine).

It belongs to the serpin family. Forms protease inhibiting heterodimers in extracellular body fluids with serine proteases such as activated protein C/coagulation factor V/F5, acrosin/ACR, chymotrypsinogen B/CTRB1, prothrombin/F2, factor Xa/F10, factor XI/F11, kallikrein/KLKB1, tissue kallikrein, trypsin/PRSS1, prostate specific antigen/KLK3, tissue plasminogen activator/PLAT and urinary plasminogen activator/PLAU. Forms membrane-anchored serine proteases inhibiting heterodimers with TMPRSS7 and TMPRSS11E. Interacts with SEMG2. Post-translationally, N-glycosylated; glycans consist of a mixture of sialylated bi- (including sialyl-Lewis X epitopes), tri- and tetra-antennary complex-type chains; affects the maximal heparin- and thrombomodulin-enhanced rates of thrombin inhibition. O-glycosylated; further modified with 2 sialic acid residues. Proteolytically cleaved at the N-terminus; inhibits slightly the heparin- and thrombomodulin-enhanced rates of thrombin inhibition. N- and O-glycosylated. Proteolytically cleaved. Inhibition of proteases is accompanied by formation of a stable enzyme-inhibitor complex and by degradation of the serpin to lower molecular weight derivatives. As to expression, expressed strongly in the liver, and moderately in the kidney and testis, but not in other tissues tested.

The protein resides in the secreted. It is found in the extracellular space. Its inhibitory activity is greatly enhanced in the presence of glycosaminoglycans, heparin, thrombomodulin and phospholipids vesicles. Its function is as follows. Heparin-dependent serine protease inhibitor acting in body fluids and secretions. Inactivates serine proteases by binding irreversibly to their serine activation site. Involved in the regulation of intravascular and extravascular proteolytic activities. Plays hemostatic roles in the blood plasma. Acts as a procoagulant and pro-inflammatory factor by inhibiting the anticoagulant activated protein C factor as well as the generation of activated protein C factor by the thrombin/thrombomodulin complex. Acts as an anticoagulant factor by inhibiting blood coagulation factors like prothrombin, factor XI, factor Xa, plasma kallikrein and fibrinolytic enzymes such as tissue- and urinary-type plasminogen activators. In seminal plasma, inactivates several serine proteases implicated in the reproductive system. Inhibits the serpin acrosin; indirectly protects component of the male genital tract from being degraded by excessive released acrosin. Inhibits tissue- and urinary-type plasminogen activator, prostate-specific antigen and kallikrein activities; has a control on the sperm motility and fertilization. Inhibits the activated protein C-catalyzed degradation of SEMG1 and SEMG2; regulates the degradation of semenogelin during the process of transfer of spermatozoa from the male reproductive tract into the female tract. In urine, inhibits urinary-type plasminogen activator and kallikrein activities. Inactivates membrane-anchored serine proteases activities such as MPRSS7 and TMPRSS11E. Inhibits urinary-type plasminogen activator-dependent tumor cell invasion and metastasis. May also play a non-inhibitory role in seminal plasma and urine as a hydrophobic hormone carrier by its binding to retinoic acid. In Bos taurus (Bovine), this protein is Plasma serine protease inhibitor (SERPINA5).